The sequence spans 61 residues: Large ribosomal subunit protein uL29 (61 aa).

Belongs to the universal ribosomal protein uL29 family.

This is Large ribosomal subunit protein uL29 from Stenotrophomonas maltophilia (strain K279a).